A 286-amino-acid polypeptide reads, in one-letter code: Glycine--tRNA ligase alpha subunit (286 aa).

The protein belongs to the class-II aminoacyl-tRNA synthetase family. As to quaternary structure, tetramer of two alpha and two beta subunits.

The protein resides in the cytoplasm. It catalyses the reaction tRNA(Gly) + glycine + ATP = glycyl-tRNA(Gly) + AMP + diphosphate. This Thermotoga sp. (strain RQ2) protein is Glycine--tRNA ligase alpha subunit.